We begin with the raw amino-acid sequence, 130 residues long: Protein UL145 (130 aa).

As to quaternary structure, interacts with host DDB1; this interaction promotes STAT2 degradation.

Plays a role in the inhibition of host innate immunity by exploiting host DDB1-cullin RING ubiquitin ligases (CRLs). Mechanistically, recruits host DDB1 via a DCAF-like interaction motif to antagonize IFN signaling by STAT2 degradation. This chain is Protein UL145 (UL145), found in Homo sapiens (Human).